A 662-amino-acid polypeptide reads, in one-letter code: Glutathione hydrolase 7 (662 aa).

Over 1–106 the chain is Cytoplasmic; it reads MAAENEASQE…AAECSCRQDG (106 aa). 4 positions are modified to phosphoserine: Ser17, Ser72, Ser79, and Ser83. The tract at residues 26–90 is disordered; it reads SFPRLPEDEP…DGSPLRETRK (65 aa). A compositionally biased stretch (low complexity) spans 72–83; it reads SSSSEMGSQDGS. The helical; Signal-anchor for type II membrane protein transmembrane segment at 107–127 threads the bilayer; that stretch reads LTVIVTACLTFATGVTVALVM. Residues 128–662 lie on the Extracellular side of the membrane; sequence QIYFGDPQIF…SLDATGASIL (535 aa). Asn198, Asn267, Asn283, Asn330, Asn353, Asn394, Asn519, Asn523, and Asn586 each carry an N-linked (GlcNAc...) asparagine glycan.

The protein belongs to the gamma-glutamyltransferase family. Heterodimer composed of the light and heavy chains. The active site is located in the light chain. Post-translationally, cleaved by autocatalysis into a large and a small subunit and the autocatalytic cleavage is essential to the functional activation of the enzyme.

The protein localises to the membrane. It carries out the reaction an N-terminal (5-L-glutamyl)-[peptide] + an alpha-amino acid = 5-L-glutamyl amino acid + an N-terminal L-alpha-aminoacyl-[peptide]. The catalysed reaction is glutathione + H2O = L-cysteinylglycine + L-glutamate. The enzyme catalyses an S-substituted glutathione + H2O = an S-substituted L-cysteinylglycine + L-glutamate. The protein operates within sulfur metabolism; glutathione metabolism. Its function is as follows. Hydrolyzes and transfers gamma-glutamyl moieties from glutathione and other gamma-glutamyl compounds to acceptors. This is Glutathione hydrolase 7 from Rattus norvegicus (Rat).